Consider the following 82-residue polypeptide: Small ribosomal subunit protein bS16 (82 aa).

The protein belongs to the bacterial ribosomal protein bS16 family.

This is Small ribosomal subunit protein bS16 from Caldanaerobacter subterraneus subsp. tengcongensis (strain DSM 15242 / JCM 11007 / NBRC 100824 / MB4) (Thermoanaerobacter tengcongensis).